Consider the following 200-residue polypeptide: Phospholipase A2 inhibitor NAI (200 aa).

The first 19 residues, 1 to 19, serve as a signal peptide directing secretion; it reads MKSLLFCCLFGTFLATGMC. 8 disulfides stabilise this stretch: Cys22–Cys46, Cys25–Cys32, Cys39–Cys67, Cys73–Cys94, Cys95–Cys100, Cys120–Cys145, Cys138–Cys165, and Cys171–Cys191.

This sequence belongs to the CNF-like-inhibitor family. In terms of assembly, heterotrimer of 2 subunits A and 1 subunit B; non-covalently linked. Expressed by the liver.

The protein localises to the secreted. Functionally, inhibits the enzymatic activity of all phospholipase A2 tested, binding with micromole to nanomole affinity. The protein is Phospholipase A2 inhibitor NAI of Notechis ater (Black tiger snake).